The following is a 394-amino-acid chain: Guanine nucleotide-binding protein G(s) subunit alpha (394 aa).

Residues 1 to 23 (MGCLGNSKTEDQRNEEKAQREAN) form a disordered region. A lipid anchor (N-palmitoyl glycine) is attached at Gly-2. A lipid anchor (S-palmitoyl cysteine) is attached at Cys-3. The span at 8–23 (KTEDQRNEEKAQREAN) shows a compositional bias: basic and acidic residues. Residues 39-394 (ATHRLLLLGA…RMHLRQYELL (356 aa)) form the G-alpha domain. A G1 motif region spans residues 42 to 55 (RLLLLGAGESGKST). 47 to 55 (GAGESGKST) is a binding site for GTP. Ser-54 is a Mg(2+) binding site. A disordered region spans residues 68–90 (FNGEGGEEDPQAARSNSDGEKAT). The segment at 196–204 (DLLRCRVLT) is G2 motif. Residues 197-204 (LLRCRVLT), 223-227 (DVGGQ), 292-295 (NKQD), and Ala-366 each bind GTP. Thr-204 provides a ligand contact to Mg(2+). Residues 219-228 (FHMFDVGGQR) form a G3 motif region. Residues 288–295 (ILFLNKQD) are G4 motif. Residues 364–369 (TCAVDT) are G5 motif.

Belongs to the G-alpha family. G(s) subfamily. In terms of assembly, heterotrimeric G proteins are composed of 3 units; alpha, beta and gamma. The alpha chain contains the guanine nucleotide binding site. Interacts with CRY1; the interaction may block GPCR-mediated regulation of cAMP concentrations. Interacts with ADCY6 and stimulates its adenylyl cyclase activity. Interacts with ADCY2 and ADCY5. Stimulates the ADCY5 adenylyl cyclase activity. Interaction with SASH1.

The protein resides in the cell membrane. Functionally, guanine nucleotide-binding proteins (G proteins) function as transducers in numerous signaling pathways controlled by G protein-coupled receptors (GPCRs). Signaling involves the activation of adenylyl cyclases, resulting in increased levels of the signaling molecule cAMP. GNAS functions downstream of several GPCRs, including beta-adrenergic receptors. Stimulates the Ras signaling pathway via RAPGEF2. This chain is Guanine nucleotide-binding protein G(s) subunit alpha (GNAS), found in Cricetulus griseus (Chinese hamster).